The sequence spans 95 residues: Small ribosomal subunit protein bS6 (95 aa).

It belongs to the bacterial ribosomal protein bS6 family.

Its function is as follows. Binds together with bS18 to 16S ribosomal RNA. This chain is Small ribosomal subunit protein bS6, found in Caldanaerobacter subterraneus subsp. tengcongensis (strain DSM 15242 / JCM 11007 / NBRC 100824 / MB4) (Thermoanaerobacter tengcongensis).